Reading from the N-terminus, the 522-residue chain is 2-isopropylmalate synthase (522 aa).

The region spanning 5–267 (VIIFDTTLRD…ETGINAKEIH (263 aa)) is the Pyruvate carboxyltransferase domain. The Mn(2+) site is built by Asp-14, His-202, His-204, and Asn-238. The interval 392–522 (QLQQLVVQSD…MQKNRELGGV (131 aa)) is regulatory domain.

It belongs to the alpha-IPM synthase/homocitrate synthase family. LeuA type 1 subfamily. In terms of assembly, homodimer. Mn(2+) is required as a cofactor.

The protein localises to the cytoplasm. It carries out the reaction 3-methyl-2-oxobutanoate + acetyl-CoA + H2O = (2S)-2-isopropylmalate + CoA + H(+). It functions in the pathway amino-acid biosynthesis; L-leucine biosynthesis; L-leucine from 3-methyl-2-oxobutanoate: step 1/4. Catalyzes the condensation of the acetyl group of acetyl-CoA with 3-methyl-2-oxobutanoate (2-ketoisovalerate) to form 3-carboxy-3-hydroxy-4-methylpentanoate (2-isopropylmalate). This chain is 2-isopropylmalate synthase, found in Shewanella baltica (strain OS195).